The sequence spans 244 residues: ATP synthase subunit a, chloroplastic (244 aa).

Helical transmembrane passes span 35-55 (QVLI…AIAV), 92-112 (VPFI…GALL), 131-151 (INTT…AGIT), 196-216 (LVVV…VMFL), and 217-237 (GLFT…AYIG).

Belongs to the ATPase A chain family. F-type ATPases have 2 components, CF(1) - the catalytic core - and CF(0) - the membrane proton channel. CF(1) has five subunits: alpha(3), beta(3), gamma(1), delta(1), epsilon(1). CF(0) has four main subunits: a, b, b' and c.

It is found in the plastid. It localises to the chloroplast thylakoid membrane. In terms of biological role, key component of the proton channel; it plays a direct role in the translocation of protons across the membrane. In Coffea arabica (Arabian coffee), this protein is ATP synthase subunit a, chloroplastic.